A 279-amino-acid chain; its full sequence is Phosphatidylglycerol--prolipoprotein diacylglyceryl transferase (279 aa).

Helical transmembrane passes span 22-42 (SAHW…WSSI), 58-78 (ILYF…VIFY), 89-109 (FIFK…GSII), 128-148 (FLVP…FING), 195-215 (ISQL…LNIF), 223-243 (GYMS…AEFF), and 256-276 (YISL…ILII). Arg-141 is an a 1,2-diacyl-sn-glycero-3-phospho-(1'-sn-glycerol) binding site.

This sequence belongs to the Lgt family.

It is found in the cell membrane. The enzyme catalyses L-cysteinyl-[prolipoprotein] + a 1,2-diacyl-sn-glycero-3-phospho-(1'-sn-glycerol) = an S-1,2-diacyl-sn-glyceryl-L-cysteinyl-[prolipoprotein] + sn-glycerol 1-phosphate + H(+). It functions in the pathway protein modification; lipoprotein biosynthesis (diacylglyceryl transfer). Its function is as follows. Catalyzes the transfer of the diacylglyceryl group from phosphatidylglycerol to the sulfhydryl group of the N-terminal cysteine of a prolipoprotein, the first step in the formation of mature lipoproteins. This Wigglesworthia glossinidia brevipalpis protein is Phosphatidylglycerol--prolipoprotein diacylglyceryl transferase.